The following is a 358-amino-acid chain: Peptide chain release factor 1 (358 aa).

The residue at position 233 (Gln-233) is an N5-methylglutamine.

This sequence belongs to the prokaryotic/mitochondrial release factor family. Post-translationally, methylated by PrmC. Methylation increases the termination efficiency of RF1.

Its subcellular location is the cytoplasm. Its function is as follows. Peptide chain release factor 1 directs the termination of translation in response to the peptide chain termination codons UAG and UAA. In Listeria monocytogenes serotype 4b (strain CLIP80459), this protein is Peptide chain release factor 1.